A 231-amino-acid chain; its full sequence is Probable intron-encoded endonuclease 1 (231 aa).

Belongs to the LAGLIDADG endonuclease family.

The protein resides in the mitochondrion. Functionally, endonuclease involved in mitochondrial 21S rRNA gene intron homing. The protein is Probable intron-encoded endonuclease 1 of Wickerhamomyces canadensis (Yeast).